Consider the following 259-residue polypeptide: MSASPDDESTSSLDHQRVLLKLSGQALLGDREFGIDEAVLRTYANEVKTAVEAGAEVAVVIGGGNIFRGVEHAMEGMTRAHADYMGMLATMINGMALQDAFEQVDLVTRLQSSIKMEEIAEPFIRRRAIRHLEKGRVVIFGAGTGNPYFTTDTAAALRGLEIDADVILKGTRVDGIFTADPEEDASAERFKQIHGQEVIDRDLRVMDMTALTLCQESKMPIVVFNMGTSNNLRRLLEGETVGTHVHWDEAKASTERVPA.

21–24 is a binding site for ATP; sequence KLSG. Gly-63 contributes to the UMP binding site. Residues Gly-64 and Arg-68 each coordinate ATP. UMP is bound by residues Asp-83 and 144–151; that span reads TGNPYFTT. Positions 171, 177, and 180 each coordinate ATP.

It belongs to the UMP kinase family. In terms of assembly, homohexamer.

Its subcellular location is the cytoplasm. The enzyme catalyses UMP + ATP = UDP + ADP. It participates in pyrimidine metabolism; CTP biosynthesis via de novo pathway; UDP from UMP (UMPK route): step 1/1. With respect to regulation, inhibited by UTP. Catalyzes the reversible phosphorylation of UMP to UDP. The chain is Uridylate kinase from Salinibacter ruber (strain DSM 13855 / M31).